Reading from the N-terminus, the 364-residue chain is Peptidoglycan transport system permease protein YejB (364 aa).

Helical transmembrane passes span leucine 9–phenylalanine 29, serine 134–isoleucine 154, isoleucine 171–phenylalanine 191, isoleucine 219–alanine 239, isoleucine 283–isoleucine 303, and tyrosine 325–leucine 345. An ABC transmembrane type-1 domain is found at leucine 131 to tyrosine 350.

Belongs to the binding-protein-dependent transport system permease family. In terms of assembly, the complex is composed of one ATP-binding protein (YejF), two transmembrane proteins (YejB and YejE) and a solute-binding protein (YepA or YejA).

The protein resides in the cell inner membrane. Part of the ABC transporter complex YejBEF-YepA involved in the uptake of muropeptides, the breakdown products of cell wall peptidoglycan. The import of muropeptides into the cell enables peptidoglycan recycling, which is vital for cell wall integrity in this bacterium. Is also probably part of the ABC transporter complex YejABEF, which is likely involved in broad-spectrum peptide import. Responsible for the translocation of the substrate across the membrane. This Agrobacterium fabrum (strain C58 / ATCC 33970) (Agrobacterium tumefaciens (strain C58)) protein is Peptidoglycan transport system permease protein YejB.